We begin with the raw amino-acid sequence, 338 residues long: MSASGLPFDDFRELLRNLPGPDAAALVAARERDAQLTKPPGALGRLEEIAFWLAAWTGKAPVVNRPLVAIFAGNHGVTRQGVTPFPSSVTAQMVENFAAGGAAINQICVSHDLGLKVFDLALEYPTGDITEEAALSERDCAATMAFGMEAIAGGTDLLCIGEMGIGNTTIAAAINLGLYGGTAEEWVGPGTGSEGEVLKRKIAAVEKAVALHRDHLSDPLELMRRLGGREIAAMAGAILAARVQKVPVIIDGYVATAAASILKAANPSALDHCLIGHVSGEPGHLRAIEKLGKTPLLALGMRLGEGTGAALAAGIVKAAAACHSGMATFAQAGVSNKE.

The active-site Proton acceptor is Glu305.

The protein belongs to the CobT family. In terms of assembly, homodimer.

The enzyme catalyses 5,6-dimethylbenzimidazole + nicotinate beta-D-ribonucleotide = alpha-ribazole 5'-phosphate + nicotinate + H(+). Its pathway is nucleoside biosynthesis; alpha-ribazole biosynthesis; alpha-ribazole from 5,6-dimethylbenzimidazole: step 1/2. In terms of biological role, catalyzes the synthesis of alpha-ribazole-5'-phosphate from nicotinate mononucleotide (NAMN) and 5,6-dimethylbenzimidazole (DMB). In Sinorhizobium sp, this protein is Nicotinate-nucleotide--dimethylbenzimidazole phosphoribosyltransferase (cobU).